A 54-amino-acid chain; its full sequence is UPF0391 membrane protein RC1_1636 (54 aa).

The next 2 membrane-spanning stretches (helical) occupy residues 3 to 23 and 30 to 50; these read YWAL…FGGI and IAQI…IMGL.

This sequence belongs to the UPF0391 family.

The protein localises to the cell membrane. The sequence is that of UPF0391 membrane protein RC1_1636 from Rhodospirillum centenum (strain ATCC 51521 / SW).